We begin with the raw amino-acid sequence, 101 residues long: Small ribosomal subunit protein uS14 (101 aa).

The protein belongs to the universal ribosomal protein uS14 family. Part of the 30S ribosomal subunit. Contacts proteins S3 and S10.

Binds 16S rRNA, required for the assembly of 30S particles and may also be responsible for determining the conformation of the 16S rRNA at the A site. This Chlamydia muridarum (strain MoPn / Nigg) protein is Small ribosomal subunit protein uS14.